The chain runs to 160 residues: MHTLLETLLESNVINIAILVVILIRFARQVVGEILVQRQQQVKEALEEASNRLKLAEQQLKTAQEEWSQTQEQINQIEEEANQTAQVVKEYWLKQANEAIAQLKTKTQQSLSQASRQVAKQIRQTLIELAIEKVKQTPIDGSQILDRHISLLSYHEAKNR.

The helical transmembrane segment at 12–31 threads the bilayer; that stretch reads NVINIAILVVILIRFARQVV.

The protein belongs to the ATPase B chain family. In terms of assembly, F-type ATPases have 2 components, F(1) - the catalytic core - and F(0) - the membrane proton channel. F(1) has five subunits: alpha(3), beta(3), gamma(1), delta(1), epsilon(1). F(0) has four main subunits: a(1), b(1), b'(1) and c(10-14). The alpha and beta chains form an alternating ring which encloses part of the gamma chain. F(1) is attached to F(0) by a central stalk formed by the gamma and epsilon chains, while a peripheral stalk is formed by the delta, b and b' chains.

It is found in the plastid. Its subcellular location is the chloroplast thylakoid membrane. F(1)F(0) ATP synthase produces ATP from ADP in the presence of a proton or sodium gradient. F-type ATPases consist of two structural domains, F(1) containing the extramembraneous catalytic core and F(0) containing the membrane proton channel, linked together by a central stalk and a peripheral stalk. During catalysis, ATP synthesis in the catalytic domain of F(1) is coupled via a rotary mechanism of the central stalk subunits to proton translocation. Functionally, component of the F(0) channel, it forms part of the peripheral stalk, linking F(1) to F(0). In Cyanidioschyzon merolae (strain NIES-3377 / 10D) (Unicellular red alga), this protein is ATP synthase subunit b, chloroplastic.